We begin with the raw amino-acid sequence, 373 residues long: UDP-N-acetylglucosamine--N-acetylmuramyl-(pentapeptide) pyrophosphoryl-undecaprenol N-acetylglucosamine transferase (373 aa).

Residues 16–18, Asn128, Arg164, Ser192, Ile250, and Gln295 contribute to the UDP-N-acetyl-alpha-D-glucosamine site; that span reads TGG.

This sequence belongs to the glycosyltransferase 28 family. MurG subfamily.

Its subcellular location is the cell inner membrane. It catalyses the reaction di-trans,octa-cis-undecaprenyl diphospho-N-acetyl-alpha-D-muramoyl-L-alanyl-D-glutamyl-meso-2,6-diaminopimeloyl-D-alanyl-D-alanine + UDP-N-acetyl-alpha-D-glucosamine = di-trans,octa-cis-undecaprenyl diphospho-[N-acetyl-alpha-D-glucosaminyl-(1-&gt;4)]-N-acetyl-alpha-D-muramoyl-L-alanyl-D-glutamyl-meso-2,6-diaminopimeloyl-D-alanyl-D-alanine + UDP + H(+). The protein operates within cell wall biogenesis; peptidoglycan biosynthesis. Cell wall formation. Catalyzes the transfer of a GlcNAc subunit on undecaprenyl-pyrophosphoryl-MurNAc-pentapeptide (lipid intermediate I) to form undecaprenyl-pyrophosphoryl-MurNAc-(pentapeptide)GlcNAc (lipid intermediate II). The sequence is that of UDP-N-acetylglucosamine--N-acetylmuramyl-(pentapeptide) pyrophosphoryl-undecaprenol N-acetylglucosamine transferase from Paraburkholderia phymatum (strain DSM 17167 / CIP 108236 / LMG 21445 / STM815) (Burkholderia phymatum).